The chain runs to 119 residues: Large ribosomal subunit protein bL20 (119 aa).

Belongs to the bacterial ribosomal protein bL20 family.

Binds directly to 23S ribosomal RNA and is necessary for the in vitro assembly process of the 50S ribosomal subunit. It is not involved in the protein synthesizing functions of that subunit. The polypeptide is Large ribosomal subunit protein bL20 (Xanthomonas oryzae pv. oryzae (strain PXO99A)).